Consider the following 75-residue polypeptide: Psi-conotoxin PIIIE (75 aa).

Positions 1–19 (MSKLGALLTICLLLFPITA) are cleaved as a signal peptide. Residues 20–50 (LLMDGDQPADRPAERMDYDISSEVHRLLERR) constitute a propeptide that is removed on maturation. A 4-hydroxyproline mark is found at proline 52, proline 53, and proline 64. Disulfide bonds link cysteine 54–cysteine 66, cysteine 55–cysteine 71, and cysteine 60–cysteine 72. Glycine 74 carries the glycine amide modification.

In terms of tissue distribution, expressed by the venom duct.

The protein resides in the secreted. In terms of biological role, psi-conotoxins act on postsynaptic membranes, and act as non-competitive antagonist of nicotinic acetylcholine receptors (nAChR). Is more toxic than Psi-conotoxin PIIIF. In vivo, has paralytic activity when injected intraperitoneally into goldfish. The polypeptide is Psi-conotoxin PIIIE (Conus purpurascens (Purple cone)).